The following is a 616-amino-acid chain: DNA mismatch repair protein MutL (616 aa).

This sequence belongs to the DNA mismatch repair MutL/HexB family.

Functionally, this protein is involved in the repair of mismatches in DNA. It is required for dam-dependent methyl-directed DNA mismatch repair. May act as a 'molecular matchmaker', a protein that promotes the formation of a stable complex between two or more DNA-binding proteins in an ATP-dependent manner without itself being part of a final effector complex. The polypeptide is DNA mismatch repair protein MutL (Syntrophus aciditrophicus (strain SB)).